The primary structure comprises 234 residues: Probable pectate lyase F (234 aa).

Positions 1-17 (MRSTAAVLSILLPGALA) are cleaved as a signal peptide. Asn168 is a glycosylation site (N-linked (GlcNAc...) asparagine).

It belongs to the polysaccharide lyase 3 family. The cofactor is Ca(2+).

It localises to the secreted. The catalysed reaction is Eliminative cleavage of (1-&gt;4)-alpha-D-galacturonan to give oligosaccharides with 4-deoxy-alpha-D-galact-4-enuronosyl groups at their non-reducing ends.. Its function is as follows. Pectinolytic enzyme consist of four classes of enzymes: pectin lyase, polygalacturonase, pectin methylesterase and rhamnogalacturonase. Among pectinolytic enzymes, pectin lyase is the most important in depolymerization of pectin, since it cleaves internal glycosidic bonds of highly methylated pectins. Favors pectate, the anion, over pectin, the methyl ester. The protein is Probable pectate lyase F (plyF) of Aspergillus terreus (strain NIH 2624 / FGSC A1156).